The primary structure comprises 432 residues: Protein prenyltransferase alpha subunit repeat-containing protein 1-A (432 aa).

6 PFTA repeats span residues glutamate 86–proline 119, lysine 121–leucine 154, glutamate 179–lysine 212, aspartate 218–threonine 251, glutamate 294–leucine 327, and serine 395–histidine 432.

The protein belongs to the protein prenyltransferase subunit alpha family.

The protein is Protein prenyltransferase alpha subunit repeat-containing protein 1-A (ptar1-a) of Xenopus laevis (African clawed frog).